We begin with the raw amino-acid sequence, 142 residues long: Large ribosomal subunit protein uL11 (142 aa).

This sequence belongs to the universal ribosomal protein uL11 family. Part of the ribosomal stalk of the 50S ribosomal subunit. Interacts with L10 and the large rRNA to form the base of the stalk. L10 forms an elongated spine to which L12 dimers bind in a sequential fashion forming a multimeric L10(L12)X complex. Post-translationally, one or more lysine residues are methylated.

Forms part of the ribosomal stalk which helps the ribosome interact with GTP-bound translation factors. The polypeptide is Large ribosomal subunit protein uL11 (Photorhabdus laumondii subsp. laumondii (strain DSM 15139 / CIP 105565 / TT01) (Photorhabdus luminescens subsp. laumondii)).